Reading from the N-terminus, the 33-residue chain is Photosystem II reaction center protein Psb30 (33 aa).

The helical transmembrane segment at 5–25 threads the bilayer; sequence VIAQLASLALIIVLGPLVIGL.

The protein belongs to the Psb30/Ycf12 family. As to quaternary structure, PSII is composed of 1 copy each of membrane proteins PsbA, PsbB, PsbC, PsbD, PsbE, PsbF, PsbH, PsbI, PsbJ, PsbK, PsbL, PsbM, PsbT, PsbX, PsbY, PsbZ, Psb30/Ycf12, peripheral proteins of the oxygen-evolving complex and a large number of cofactors. It forms dimeric complexes.

The protein localises to the plastid. It is found in the chloroplast thylakoid membrane. A core subunit of photosystem II (PSII), probably helps stabilize the reaction center. The chain is Photosystem II reaction center protein Psb30 from Chara vulgaris (Common stonewort).